The following is an 812-amino-acid chain: Protein let-653 (812 aa).

An N-terminal signal peptide occupies residues 1–21 (MRHPLISLLLLIAFYSTSSEA). Apple domains follow at residues 26–116 (CNSF…WKYC) and 123–209 (CSGE…ENNC). Cystine bridges form between Cys26/Cys116, Cys53/Cys88, Cys57/Cys72, Cys123/Cys209, Cys154/Cys178, and Cys158/Cys166. Residues Asn172, Asn211, and Asn272 are each glycosylated (N-linked (GlcNAc...) asparagine). Residues 221–725 (ECRDNGISVS…NTCDDVEGCD (505 aa)) form the ZP domain. Low complexity-rich tracts occupy residues 375 to 449 (QVTT…STTT) and 496 to 584 (PTTT…PASS). 2 disordered regions span residues 375–461 (QVTT…STIM) and 494–584 (DVPT…PASS). Residue Asn771 is glycosylated (N-linked (GlcNAc...) asparagine).

Post-translationally, cleaved at the C-terminal domain. In terms of tissue distribution, expressed in external cuticle-producing epithelial cells including the epidermis, vulva, rectum, excretory duct and excretory pore.

The protein localises to the apical cell membrane. It is found in the secreted. It localises to the extracellular space. Functionally, required for epithelial tube development and shaping. Involved in the morphogenesis and function of the three unicellular tubes of the excretory system, the canal cell, the duct cell and the pore cell. Also plays a role in cuticle development, alae formation and shaping of the vulval lumen. Required for larval development. This chain is Protein let-653, found in Caenorhabditis elegans.